Here is a 185-residue protein sequence, read N- to C-terminus: Elongation factor P (185 aa).

Belongs to the elongation factor P family.

It localises to the cytoplasm. It functions in the pathway protein biosynthesis; polypeptide chain elongation. In terms of biological role, involved in peptide bond synthesis. Stimulates efficient translation and peptide-bond synthesis on native or reconstituted 70S ribosomes in vitro. Probably functions indirectly by altering the affinity of the ribosome for aminoacyl-tRNA, thus increasing their reactivity as acceptors for peptidyl transferase. The protein is Elongation factor P of Desulfovibrio desulfuricans (strain ATCC 27774 / DSM 6949 / MB).